We begin with the raw amino-acid sequence, 187 residues long: Transmembrane protein 11-B, mitochondrial (187 aa).

2 helical membrane-spanning segments follow: residues 79–95 and 102–119; these read TAVL…LALP and VSLP…LYGI.

The protein belongs to the TMEM11 family.

It localises to the mitochondrion inner membrane. In terms of biological role, plays a role in mitochondrial morphogenesis. This is Transmembrane protein 11-B, mitochondrial (tmem11-b) from Xenopus laevis (African clawed frog).